Consider the following 248-residue polypeptide: DNA-directed RNA polymerase subunit Rpo3 (248 aa).

Belongs to the archaeal Rpo3/eukaryotic RPB3 RNA polymerase subunit family. As to quaternary structure, part of the RNA polymerase complex.

It is found in the cytoplasm. The enzyme catalyses RNA(n) + a ribonucleoside 5'-triphosphate = RNA(n+1) + diphosphate. Its function is as follows. DNA-dependent RNA polymerase (RNAP) catalyzes the transcription of DNA into RNA using the four ribonucleoside triphosphates as substrates. This Halobacterium salinarum (strain ATCC 29341 / DSM 671 / R1) protein is DNA-directed RNA polymerase subunit Rpo3.